The sequence spans 35 residues: Photosystem II reaction center protein T (35 aa).

A helical membrane pass occupies residues 3–23 (ALVYTFLLVSTLGIIFFAIFF).

It belongs to the PsbT family. As to quaternary structure, PSII is composed of 1 copy each of membrane proteins PsbA, PsbB, PsbC, PsbD, PsbE, PsbF, PsbH, PsbI, PsbJ, PsbK, PsbL, PsbM, PsbT, PsbY, PsbZ, Psb30/Ycf12, at least 3 peripheral proteins of the oxygen-evolving complex and a large number of cofactors. It forms dimeric complexes.

The protein resides in the plastid. The protein localises to the chloroplast thylakoid membrane. Functionally, found at the monomer-monomer interface of the photosystem II (PS II) dimer, plays a role in assembly and dimerization of PSII. PSII is a light-driven water plastoquinone oxidoreductase, using light energy to abstract electrons from H(2)O, generating a proton gradient subsequently used for ATP formation. The chain is Photosystem II reaction center protein T from Pisum sativum (Garden pea).